A 97-amino-acid polypeptide reads, in one-letter code: Co-chaperonin GroES (97 aa).

It belongs to the GroES chaperonin family. As to quaternary structure, heptamer of 7 subunits arranged in a ring. Interacts with the chaperonin GroEL.

The protein resides in the cytoplasm. Together with the chaperonin GroEL, plays an essential role in assisting protein folding. The GroEL-GroES system forms a nano-cage that allows encapsulation of the non-native substrate proteins and provides a physical environment optimized to promote and accelerate protein folding. GroES binds to the apical surface of the GroEL ring, thereby capping the opening of the GroEL channel. This chain is Co-chaperonin GroES, found in Bifidobacterium longum (strain NCC 2705).